A 213-amino-acid chain; its full sequence is Cytokinin riboside 5'-monophosphate phosphoribohydrolase LOG1 (213 aa).

Substrate is bound by residues Glu78, 96–97 (RK), 113–119 (GYGTLEE), and Thr125.

This sequence belongs to the LOG family. As to expression, expressed in roots and shoots. Detected in the vascular tissues of roots, cotyledons, leaves and pistils, in the shoot apical meristem and in immature flowers.

Its subcellular location is the cytoplasm. The protein localises to the nucleus. The enzyme catalyses N(6)-(dimethylallyl)adenosine 5'-phosphate + H2O = N(6)-dimethylallyladenine + D-ribose 5-phosphate. It carries out the reaction 9-ribosyl-trans-zeatin 5'-phosphate + H2O = trans-zeatin + D-ribose 5-phosphate. Its function is as follows. Cytokinin-activating enzyme working in the direct activation pathway. Phosphoribohydrolase that converts inactive cytokinin nucleotides to the biologically active free-base forms. This Arabidopsis thaliana (Mouse-ear cress) protein is Cytokinin riboside 5'-monophosphate phosphoribohydrolase LOG1 (LOG1).